Here is a 95-residue protein sequence, read N- to C-terminus: Large ribosomal subunit protein eL31 (95 aa).

The protein belongs to the eukaryotic ribosomal protein eL31 family.

The polypeptide is Large ribosomal subunit protein eL31 (rpl31e) (Pyrococcus horikoshii (strain ATCC 700860 / DSM 12428 / JCM 9974 / NBRC 100139 / OT-3)).